Consider the following 145-residue polypeptide: Small ribosomal subunit protein uS9 (145 aa).

Belongs to the universal ribosomal protein uS9 family.

The protein localises to the cytoplasm. This Fritillaria agrestis (Stinkbells) protein is Small ribosomal subunit protein uS9 (RPS16).